Reading from the N-terminus, the 273-residue chain is Homeobox protein Nkx-2.2 (273 aa).

2 disordered regions span residues M1 to V56 and A91 to R131. Residues D20–G38 are compositionally biased toward acidic residues. The segment at residues K128 to R187 is a DNA-binding region (homeobox).

It belongs to the NK-2 homeobox family. Interacts with OLIG2. In terms of tissue distribution, expressed in restricted areas of the developing CNS: the hindbrain and forebrain, and pancreas.

It is found in the nucleus. Functionally, transcriptional activator involved in the development of insulin-producting beta cells in the endocrine pancreas. May also be involved in specifying diencephalic neuromeric boundaries, and in controlling the expression of genes that play a role in axonal guidance. Binds to elements within the NEUROD1 promoter. This Mus musculus (Mouse) protein is Homeobox protein Nkx-2.2 (Nkx2-2).